Reading from the N-terminus, the 618-residue chain is Proline--tRNA ligase (618 aa).

This sequence belongs to the class-II aminoacyl-tRNA synthetase family. ProS type 1 subfamily. As to quaternary structure, homodimer.

Its subcellular location is the cytoplasm. The catalysed reaction is tRNA(Pro) + L-proline + ATP = L-prolyl-tRNA(Pro) + AMP + diphosphate. Its function is as follows. Catalyzes the attachment of proline to tRNA(Pro) in a two-step reaction: proline is first activated by ATP to form Pro-AMP and then transferred to the acceptor end of tRNA(Pro). As ProRS can inadvertently accommodate and process non-cognate amino acids such as alanine and cysteine, to avoid such errors it has two additional distinct editing activities against alanine. One activity is designated as 'pretransfer' editing and involves the tRNA(Pro)-independent hydrolysis of activated Ala-AMP. The other activity is designated 'posttransfer' editing and involves deacylation of mischarged Ala-tRNA(Pro). The misacylated Cys-tRNA(Pro) is not edited by ProRS. This Streptococcus pyogenes serotype M2 (strain MGAS10270) protein is Proline--tRNA ligase.